Here is a 258-residue protein sequence, read N- to C-terminus: Venom plasminogen activator (258 aa).

Residues 1 to 18 (MVLIRVLANLLILQLSYA) form the signal peptide. Residues 19–24 (QKSSEL) constitute a propeptide that is removed on maturation. The 225-residue stretch at 25–249 (VVGGDECNIN…YTDWIQSIIS (225 aa)) folds into the Peptidase S1 domain. Intrachain disulfides connect cysteine 31/cysteine 163, cysteine 50/cysteine 66, cysteine 98/cysteine 256, cysteine 142/cysteine 210, cysteine 174/cysteine 189, and cysteine 200/cysteine 225. Asparagine 44 carries an N-linked (GlcNAc...) asparagine glycan. Residues histidine 65 and aspartate 110 each act as charge relay system in the active site. Catalysis depends on serine 204, which acts as the Charge relay system.

Belongs to the peptidase S1 family. Snake venom subfamily. As to quaternary structure, monomer. As to expression, expressed by the venom gland.

Its subcellular location is the secreted. Snake venom serine protease that activates plasminogen. Shows a preferential cleavage at Arg-|-Xaa instead of Lys-|-Xaa bonds. This chain is Venom plasminogen activator, found in Agkistrodon piscivorus leucostoma (Western cottonmouth).